The primary structure comprises 119 residues: Holo-[acyl-carrier-protein] synthase (119 aa).

Residues D2 and E51 each contribute to the Mg(2+) site.

This sequence belongs to the P-Pant transferase superfamily. AcpS family. It depends on Mg(2+) as a cofactor.

The protein resides in the cytoplasm. It catalyses the reaction apo-[ACP] + CoA = holo-[ACP] + adenosine 3',5'-bisphosphate + H(+). Its function is as follows. Transfers the 4'-phosphopantetheine moiety from coenzyme A to a Ser of acyl-carrier-protein. The polypeptide is Holo-[acyl-carrier-protein] synthase (Chlorobium luteolum (strain DSM 273 / BCRC 81028 / 2530) (Pelodictyon luteolum)).